We begin with the raw amino-acid sequence, 136 residues long: UPF0216 protein PYRAB16100 (136 aa).

It belongs to the UPF0216 family.

In Pyrococcus abyssi (strain GE5 / Orsay), this protein is UPF0216 protein PYRAB16100.